A 291-amino-acid polypeptide reads, in one-letter code: MNLFRFCSGLKVLGYFMILLVVAVVGVSYYAVVVSTWWPILIRGDHGALSALAALIIFVFHFLLIMLLWSYFTTVFTDPGSVPEHFRREMGGGDSLEAGTSTDQGAFGSLGYCTKCRNVKPPRCHHCSVCQRCVLKMDHHCVWIVNCVGARNYKFFLLFLFYTFLETMLDVIVLLPSFIEFFSQAIKHSSSPGKLASLVLAFVLNFAFVLSLLCFVVMHISLLSSNTTSVEVHEKNGEVRWKYDLGKKKNFEQVFGKKKAFWLLPLYSKDDIDNITSLEGLEFPTCSDIDP.

Transmembrane regions (helical) follow at residues 14–34 and 49–69; these read GYFM…AVVV and LSAL…MLLW. Positions 111-161 constitute a DHHC domain; that stretch reads GYCTKCRNVKPPRCHHCSVCQRCVLKMDHHCVWIVNCVGARNYKFFLLFLF. Cysteine 141 serves as the catalytic S-palmitoyl cysteine intermediate. Helical transmembrane passes span 155–175 and 198–218; these read FFLL…IVLL and LVLA…FVVM.

This sequence belongs to the DHHC palmitoyltransferase family.

It localises to the cell membrane. It carries out the reaction L-cysteinyl-[protein] + hexadecanoyl-CoA = S-hexadecanoyl-L-cysteinyl-[protein] + CoA. Palmitoyl acyltransferase. The sequence is that of Probable protein S-acyltransferase 12 (PAT12) from Arabidopsis thaliana (Mouse-ear cress).